Consider the following 1043-residue polypeptide: MRTKLDGRIRTQIENGVASGHRSMFAVVGDKARDQVPILYHILSKSTVSARPNVLWCYKKELSFSTHRAKKAKKMKKATTTISGSLPDADPFDVFISSTQIRYCYYNETEKILGNTFGVLVLQDFEAMTPNLLARTIETIEGGGMVILLMQSVRSLRQLYTISMDVHNRYRTEAHNEITARFNERFILSLASCSSVLVLDDQLRVLPISSHIENVEAIPASQKKIQSESDAELASLKEAMKETKPIGPLLSRARTACQAKALLRFLDVITEKQSNVTCSLTAGRGRGKSAAVGLSLAGAIAFGYTNIFVTSPSPENLKTLFEFVVKGFDALDYQEHTDYELIQSANPEFKNCLVRINVFREHKQTIQYISPTDVQKLGQCELIVIDEAAAIPLPLVKELISGPYISFLSSTINGYEGTGRSLSLKLLQQLRQQSAGGEAKEGKSASNKGKTLHEMHMEESIRYKPGDKIEKWLNRLLCLDATNCQLKLECGTPPPAACELYIVNRDTLFSFHDASEAFLQQVMAIFVSAHYKNSPNDLQMLSDAPAHNLFVLMAPIDKSRKTIPEVLAVVQVCLEGRLDSDNIQNGLESGKRAAGDLLPWTVSQQFMDKQFGTLCGGRIVRVAVHPDYQSMGYGGRAVQLIEQYYLGLATSLDEEEKAPAPPSKTVIKQVKDGHTVELLEERIEPRADLPPLLQRLDERKPERLDYLGVSFGLTVPLLKFWKRNEFVPVYIRQNSNDITGEHTCIILKGLEHGGSDSDEEPSATWLPVYWREFRRRIVNLLSFDFSSFPAQMALSLLQLKNKHVEKQMKRLVIERSELAIHLSNTDLRRMSQYGRNMVDSHIITDILPIVAKLNFEQRLPQELKLAVTQSAILLARGLQHKHFEDISKELDLPMNQIFALLTKAIRRIGDWFDEVCETAVRENLDKEAEASAANKPTSSLPKAVPLANLEDELESAAKEIRARHDRDRKALLAELGNELQKYEIIQDEKELAEAYESVNMKYANKLVSVKSKRTAIQAAIPDAKDPANKNAKKKKRFSSGGRR.

Residues 285-294 (GRGKSAAVGL) and arginine 462 each bind ATP. Residues 551–736 (VLMAPIDKSR…VPVYIRQNSN (186 aa)) form the N-acetyltransferase domain. Acetyl-CoA-binding positions include 622 to 624 (VAV), 629 to 635 (QSMGYGG), and arginine 723. Residues 1020–1043 (IPDAKDPANKNAKKKKRFSSGGRR) form a disordered region. Over residues 1030 to 1043 (NAKKKKRFSSGGRR) the composition is skewed to basic residues.

It belongs to the RNA cytidine acetyltransferase family. NAT10 subfamily. In terms of assembly, part of the small subunit (SSU) processome, composed of more than 70 proteins and the RNA chaperone small nucleolar RNA (snoRNA) U3.

The protein localises to the nucleus. The protein resides in the nucleolus. The catalysed reaction is a cytidine in 18S rRNA + acetyl-CoA + ATP + H2O = an N(4)-acetylcytidine in 18S rRNA + ADP + phosphate + CoA + H(+). It catalyses the reaction a cytidine in tRNA + acetyl-CoA + ATP + H2O = an N(4)-acetylcytidine in tRNA + ADP + phosphate + CoA + H(+). Functionally, RNA cytidine acetyltransferase with specificity toward both 18S rRNA and tRNAs. Catalyzes the formation of N(4)-acetylcytidine (ac4C) in 18S rRNA. Required for early nucleolar cleavages of precursor rRNA at sites A0, A1 and A2 during 18S rRNA synthesis. Catalyzes the formation of ac4C in serine and leucine tRNAs. Requires a tRNA-binding adapter protein for full tRNA acetyltransferase activity but not for 18S rRNA acetylation. Part of the small subunit (SSU) processome, first precursor of the small eukaryotic ribosomal subunit. During the assembly of the SSU processome in the nucleolus, many ribosome biogenesis factors, an RNA chaperone and ribosomal proteins associate with the nascent pre-rRNA and work in concert to generate RNA folding, modifications, rearrangements and cleavage as well as targeted degradation of pre-ribosomal RNA by the RNA exosome. The polypeptide is RNA cytidine acetyltransferase (Caenorhabditis elegans).